The following is a 171-amino-acid chain: Der GTPase-activating protein YihI (171 aa).

Disordered stretches follow at residues 1-99 (MKKP…PQAE) and 145-171 (GLSY…KGGN). Residues 20-30 (TREELNQEARD) show a composition bias toward basic and acidic residues. Positions 40–59 (HSAGSRANGSSASGSTAQNS) are enriched in low complexity. Acidic residues predominate over residues 148 to 160 (YEDDEDDEEEEKQ).

This sequence belongs to the YihI family. Interacts with Der.

Its function is as follows. A GTPase-activating protein (GAP) that modifies Der/EngA GTPase function. May play a role in ribosome biogenesis. The sequence is that of Der GTPase-activating protein YihI from Enterobacter sp. (strain 638).